A 443-amino-acid chain; its full sequence is Histidinol dehydrogenase (443 aa).

NAD(+) contacts are provided by Y133, Q191, and N214. Substrate is bound by residues S240, Q262, and H265. Q262 and H265 together coordinate Zn(2+). Active-site proton acceptor residues include E329 and H330. Residues H330, D363, E417, and H422 each contribute to the substrate site. D363 is a Zn(2+) binding site. Position 422 (H422) interacts with Zn(2+).

The protein belongs to the histidinol dehydrogenase family. As to quaternary structure, homodimer. Requires Zn(2+) as cofactor.

It carries out the reaction L-histidinol + 2 NAD(+) + H2O = L-histidine + 2 NADH + 3 H(+). Its pathway is amino-acid biosynthesis; L-histidine biosynthesis; L-histidine from 5-phospho-alpha-D-ribose 1-diphosphate: step 9/9. Its function is as follows. Catalyzes the sequential NAD-dependent oxidations of L-histidinol to L-histidinaldehyde and then to L-histidine. The polypeptide is Histidinol dehydrogenase (Blochmanniella pennsylvanica (strain BPEN)).